Here is a 325-residue protein sequence, read N- to C-terminus: MDLKEAFATIFDQNRKVALYAAGTTVAVLGLGLVFKYMRREEKLTRVGVVTKLLVHPLKSGKAVSVEAAECLRMGLKYGELRDRHWLVITEDGHMVTGRQQPRLVLVSLTCEGGHVSLNGPQMEELKFPLNNSSDLVVDCRVFSVDVQGRDCGDKVSEWLTRFLEADKPVRLVHYEPDLKPQRPHEKEPLFPKDDEVAYPDAAPVMLMTEASVGDLNSRLDKDLSVFQFRPSIVVSDCEAFTEDTWDHIRIGEVELKRVIGCGRCLFTTVDPETGVFSRKEPLETLKTYRMTDPKQKTSPILGQYYTVRKTGVLHVGEPVYKITY.

The Mitochondrial matrix segment spans residues 1-16 (MDLKEAFATIFDQNRK). A helical; Signal-anchor for type II membrane protein transmembrane segment spans residues 17-36 (VALYAAGTTVAVLGLGLVFK). The Cytoplasmic segment spans residues 37–325 (YMRREEKLTR…VGEPVYKITY (289 aa)). Mo-molybdopterin contacts are provided by K59, S60, and R84. The MOSC N-terminal region stretch occupies residues 85-175 (HWLVITEDGH…ADKPVRLVHY (91 aa)). Residues 179 to 323 (LKPQRPHEKE…LHVGEPVYKI (145 aa)) enclose the MOSC domain. Positions 230, 264, 265, and 305 each coordinate Mo-molybdopterin.

Requires Mo-molybdopterin as cofactor.

Its subcellular location is the mitochondrion outer membrane. The protein resides in the membrane. The catalysed reaction is N(omega)-hydroxy-L-arginine + 2 Fe(II)-[cytochrome b5] + 2 H(+) = L-arginine + 2 Fe(III)-[cytochrome b5] + H2O. Its function is as follows. Catalyzes the reduction of N-oxygenated molecules, acting as a counterpart of cytochrome P450 and flavin-containing monooxygenases in metabolic cycles. As a component of prodrug-converting system, reduces a multitude of N-hydroxylated prodrugs particularly amidoximes, leading to increased drug bioavailability. May be involved in mitochondrial N(omega)-hydroxy-L-arginine (NOHA) reduction, regulating endogenous nitric oxide levels and biosynthesis. Postulated to cleave the N-OH bond of N-hydroxylated substrates in concert with electron transfer from NADH to cytochrome b5 reductase then to cytochrome b5, the ultimate electron donor that primes the active site for substrate reduction. The sequence is that of Mitochondrial amidoxime-reducing component 1 (mtarc1) from Danio rerio (Zebrafish).